We begin with the raw amino-acid sequence, 281 residues long: 40S small subunit processome assembly factor 1 (281 aa).

The disordered stretch occupies residues 29-141 (LGETEGETEQ…DEDEPAKNKT (113 aa)). Residues Ser67 and Ser75 each carry the phosphoserine modification. Lys172 is modified (N6-acetyllysine). The interval 221–254 (ETDIFKKKKKKGRGQEDRRSKKSAPSILSSGQVG) is disordered. Ser267 carries the post-translational modification Phosphoserine.

In terms of assembly, part of the small subunit (SSU) processome, composed of more than 70 proteins and the RNA chaperone small nucleolar RNA (snoRNA) U3.

It localises to the chromosome. The protein localises to the nucleus. It is found in the nucleolus. Its function is as follows. Part of the small subunit (SSU) processome, first precursor of the small eukaryotic ribosomal subunit. During the assembly of the SSU processome in the nucleolus, many ribosome biogenesis factors, an RNA chaperone and ribosomal proteins associate with the nascent pre-rRNA and work in concert to generate RNA folding, modifications, rearrangements and cleavage as well as targeted degradation of pre-ribosomal RNA by the RNA exosome. Prevents helicase DHX37 to be recruited before post-A1 state. The protein is 40S small subunit processome assembly factor 1 of Mus musculus (Mouse).